A 325-amino-acid polypeptide reads, in one-letter code: DNA-directed RNA polymerase subunit alpha (325 aa).

Residues 1–231 are alpha N-terminal domain (alpha-NTD); that stretch reads MQTSLLKPKI…DQLSVFAALE (231 aa). The segment at 246–325 is alpha C-terminal domain (alpha-CTD); that stretch reads IDPILLRPVD…ENWPPAGLDK (80 aa).

This sequence belongs to the RNA polymerase alpha chain family. As to quaternary structure, homodimer. The RNAP catalytic core consists of 2 alpha, 1 beta, 1 beta' and 1 omega subunit. When a sigma factor is associated with the core the holoenzyme is formed, which can initiate transcription.

It catalyses the reaction RNA(n) + a ribonucleoside 5'-triphosphate = RNA(n+1) + diphosphate. DNA-dependent RNA polymerase catalyzes the transcription of DNA into RNA using the four ribonucleoside triphosphates as substrates. In Burkholderia orbicola (strain MC0-3), this protein is DNA-directed RNA polymerase subunit alpha.